A 533-amino-acid chain; its full sequence is Beta-1,4-mannosyl-glycoprotein 4-beta-N-acetylglucosaminyltransferase (533 aa).

The Cytoplasmic segment spans residues 1–7; that stretch reads MKMRRYK. Residues 8 to 23 form a helical; Signal-anchor for type II membrane protein membrane-spanning segment; that stretch reads LFLMFCMAGLCLISFL. The Lumenal portion of the chain corresponds to 24–533; sequence HFFKTLSYVT…ARGKLDEAEV (510 aa). The disordered stretch occupies residues 119–158; it reads KPGTKMLERPPPGRPEEKPEGANGSSARRPPRYLLSARER. N-linked (GlcNAc...) asparagine glycosylation is found at asparagine 141, asparagine 241, asparagine 259, and asparagine 397. A disordered region spans residues 507–533; sequence STAAGGWRHRGPEGRPPARGKLDEAEV.

This sequence belongs to the glycosyltransferase 17 family. As to quaternary structure, interacts with MGAT4D.

The protein localises to the golgi apparatus membrane. It catalyses the reaction N(4)-{beta-D-GlcNAc-(1-&gt;2)-alpha-D-Man-(1-&gt;3)-[beta-D-GlcNAc-(1-&gt;2)-alpha-D-Man-(1-&gt;6)]-beta-D-Man-(1-&gt;4)-beta-D-GlcNAc-(1-&gt;4)-beta-D-GlcNAc}-L-asparaginyl-[protein] + UDP-N-acetyl-alpha-D-glucosamine = N(4)-{beta-D-GlcNAc-(1-&gt;2)-alpha-D-Man-(1-&gt;3)-[beta-D-GlcNAc-(1-&gt;4)]-[beta-D-GlcNAc-(1-&gt;2)-alpha-D-Man-(1-&gt;6)]-beta-D-Man-(1-&gt;4)-beta-D-GlcNAc-(1-&gt;4)-beta-D-GlcNAc}-L-asparaginyl-[protein] + UDP + H(+). Its pathway is protein modification; protein glycosylation. Functionally, it is involved in the regulation of the biosynthesis and biological function of glycoprotein oligosaccharides. Catalyzes the addition of N-acetylglucosamine in beta 1-4 linkage to the beta-linked mannose of the trimannosyl core of N-linked sugar chains, called bisecting N-acetylglucosamine (GlcNAc). It is one of the most important enzymes involved in the regulation of the biosynthesis of glycoprotein oligosaccharides. The addition of this bisecting GlcNAc residue alters not only the composition, but also the conformation of the N-glycan. The introduction of the bisecting GlcNAc residue results in the suppression of further processing and elongation of N-glycans, precluding the formation of beta-1,6 GlcNAc branching, catalyzed by MGAT5 since it is unable to use the bisected oligosaccharide as a substrate. Addition of bisecting N-acetylglucosamine to CDH1/E-cadherin modulates CDH1 cell membrane location. Inhibits NeuAc-alpha-2,3-Gal-beta-1,4-GlcNAc- formation which modulates sialylation levels and plays a role in cell migration regulation. In brain, addition of bisecting N-acetylglucosamine to BACE1 blocks its lysosomal targeting in response to oxidative stress and further degradation which increases its location to early endosome and the APP cleavage. This chain is Beta-1,4-mannosyl-glycoprotein 4-beta-N-acetylglucosaminyltransferase, found in Homo sapiens (Human).